Reading from the N-terminus, the 100-residue chain is Small ribosomal subunit protein uS14c (100 aa).

This sequence belongs to the universal ribosomal protein uS14 family. In terms of assembly, part of the 30S ribosomal subunit.

It localises to the plastid. Its subcellular location is the chloroplast. In terms of biological role, binds 16S rRNA, required for the assembly of 30S particles. The chain is Small ribosomal subunit protein uS14c from Citrus sinensis (Sweet orange).